Reading from the N-terminus, the 545-residue chain is Cannabidiolic acid synthase-like 1 (545 aa).

An N-terminal signal peptide occupies residues 1–28; the sequence is MKCSTFCFWYVCKIIFFFLSFNIQISIA. A disulfide bridge links Cys-37 with Cys-99. Asn-45, Asn-65, Asn-89, and Asn-168 each carry an N-linked (GlcNAc...) asparagine glycan. An FAD-binding PCMH-type domain is found at 77-251; the sequence is TTPKPLVIIT…AAWKIRLVAV (175 aa). A cross-link (6-(S-cysteinyl)-8alpha-(pros-histidyl)-FAD (His-Cys)) is located at residues 114-176; it reads HDAEGMSYIS…ENLSFPAGYC (63 aa). Position 292 (His-292) interacts with substrate. N-linked (GlcNAc...) asparagine glycans are attached at residues Asn-297, Asn-305, Asn-329, and Asn-361. Tyr-417 is a substrate binding site. N-linked (GlcNAc...) asparagine glycosylation is present at Asn-467. Tyr-484 acts as the Proton acceptor in catalysis. Asn-499 carries N-linked (GlcNAc...) asparagine glycosylation.

This sequence belongs to the oxygen-dependent FAD-linked oxidoreductase family. It depends on FAD as a cofactor. Post-translationally, the FAD cofactor is bound via a bicovalent 6-S-cysteinyl, 8alpha-N1-histidyl FAD linkage.

It localises to the secreted. Its function is as follows. Has no cannabidiolic acid synthase activity. In Cannabis sativa (Hemp), this protein is Cannabidiolic acid synthase-like 1 (CBDAS2).